Here is a 78-residue protein sequence, read N- to C-terminus: Large ribosomal subunit protein bL28 (78 aa).

The protein belongs to the bacterial ribosomal protein bL28 family.

The chain is Large ribosomal subunit protein bL28 from Shigella boydii serotype 4 (strain Sb227).